We begin with the raw amino-acid sequence, 99 residues long: Small ribosomal subunit protein eS24 (99 aa).

It belongs to the eukaryotic ribosomal protein eS24 family. In terms of assembly, may be present in 2 copies per 70S ribosome. Part of the 30S ribosomal subunit, where it binds 16S rRNA at its canonical site at the bse of the body, as well as a possible second 50S binding site near 23S rRNA helix 45.

This is Small ribosomal subunit protein eS24 from Pyrococcus furiosus (strain ATCC 43587 / DSM 3638 / JCM 8422 / Vc1).